Reading from the N-terminus, the 197-residue chain is Dephospho-CoA kinase (197 aa).

Positions 3–197 (ILGLTGSIAM…TGCLVGQGSR (195 aa)) constitute a DPCK domain. Residue 11 to 16 (AMGKST) participates in ATP binding.

It belongs to the CoaE family.

It is found in the cytoplasm. It catalyses the reaction 3'-dephospho-CoA + ATP = ADP + CoA + H(+). Its pathway is cofactor biosynthesis; coenzyme A biosynthesis; CoA from (R)-pantothenate: step 5/5. Catalyzes the phosphorylation of the 3'-hydroxyl group of dephosphocoenzyme A to form coenzyme A. The chain is Dephospho-CoA kinase from Zymomonas mobilis subsp. mobilis (strain ATCC 31821 / ZM4 / CP4).